The sequence spans 177 residues: LOB domain-containing protein 33 (177 aa).

Residues 6 to 108 enclose the LOB domain; it reads SSCGACKFLR…EEIEFLGSQM (103 aa).

It belongs to the LOB domain-containing protein family. In terms of tissue distribution, expressed in roots.

The sequence is that of LOB domain-containing protein 33 (LBD33) from Arabidopsis thaliana (Mouse-ear cress).